A 209-amino-acid chain; its full sequence is Protein GET1 (209 aa).

The Lumenal portion of the chain corresponds to 1–3 (MSL). Residues 4–23 (LLVIFLLELVVQLVNTIGAK) traverse the membrane as a helical segment. Topologically, residues 24–110 (TINNLLWRFY…SFSRKLTIYR (87 aa)) are cytoplasmic. The stretch at 74 to 101 (WARLQRKHDKLMDELEKKKSQLDAHRTS) forms a coiled coil. The helical transmembrane segment at 111 to 131 (WILTRGMQWFLCFWFSSQPMF) threads the bilayer. The Lumenal segment spans residues 132-155 (WLPYGWFPYWVEWLVSFPNAPMGS). Residues 156-172 (VSIVVWQSACSGVLALV) form a helical membrane-spanning segment. Over 173–209 (IEAVMAVVRYTGGTGMQKQRQPVPAAGGAPGTSKKDL) the chain is Cytoplasmic. The segment at 188–209 (MQKQRQPVPAAGGAPGTSKKDL) is disordered.

It belongs to the WRB/GET1 family. In terms of assembly, interacts with GET3.

The protein resides in the endoplasmic reticulum membrane. In terms of biological role, required for the post-translational delivery of tail-anchored (TA) proteins to the endoplasmic reticulum. Acts as a membrane receptor for soluble GET3, which recognizes and selectively binds the transmembrane domain of TA proteins in the cytosol. This chain is Protein GET1, found in Chaetomium thermophilum (strain DSM 1495 / CBS 144.50 / IMI 039719) (Thermochaetoides thermophila).